The chain runs to 127 residues: DNA-directed RNA polymerases I, II, and III subunit RPABC2 (127 aa).

Positions 1-34 (MSDNEDNFDGDDFDDVEEDEGLDDLENAEEEGQE) are enriched in acidic residues. The segment at 1 to 53 (MSDNEDNFDGDDFDDVEEDEGLDDLENAEEEGQENVEILPSGERPQANQKRIT) is disordered. Ser2 carries the N-acetylserine modification. A Phosphoserine; by CK2 modification is found at Ser2.

It belongs to the archaeal Rpo6/eukaryotic RPB6 RNA polymerase subunit family. As to quaternary structure, component of the RNA polymerase I (Pol I), RNA polymerase II (Pol II) and RNA polymerase III (Pol III) complexes consisting of at least 13, 12 and 17 subunits, respectively. Pol I complex consists of a ten-subunit catalytic core composed of POLR1A/RPA1, POLR1B/RPA2, POLR1C/RPAC1, POLR1D/RPAC2, POLR1H/RPA12, POLR2E/RPABC1, POLR2F/RPABC2, POLR2H/RPABC3, POLR2K/RPABC4 and POLR2L/RPABC5; a mobile stalk subunit POLR1F/RPA43 protruding from the core and additional subunits homologous to general transcription factors POLR1E/RPA49 and POLR1G/RPA34. Part of Pol I pre-initiation complex (PIC), in which Pol I core assembles with RRN3 and promoter-bound UTBF and SL1/TIF-IB complex. Pol II complex contains a ten-subunit catalytic core composed of POLR2A/RPB1, POLR2B/RPB2, POLR2C/RPB3, POLR2I/RPB9, POLR2J/RPB11, POLR2E/RPABC1, POLR2F/RPABC2, POLR2H/RPABC3, POLR2K/RPABC4 and POLR2L/RPABC5 and a mobile stalk composed of two subunits POLR2D/RPB4 and POLR2G/RPB7. Part of Pol II(G) complex, in which Pol II core associates with an additional subunit POLR2M; unlike conventional Pol II, Pol II(G) functions as a transcriptional repressor. Part of TBP-based Pol II pre-initiation complex (PIC), in which Pol II core assembles with general transcription factors and other specific initiation factors including GTF2E1, GTF2E2, GTF2F1, GTF2F2, TCEA1, ERCC2, ERCC3, GTF2H2, GTF2H3, GTF2H4, GTF2H5, GTF2A1, GTF2A2, GTF2B and TBP; this large multi-subunit PIC complex mediates DNA unwinding and targets Pol II core to the transcription start site where the first phosphodiester bond forms. Pol III complex consists of a ten-subunit catalytic core composed of POLR3A/RPC1, POLR3B/RPC2, POLR1C/RPAC1, POLR1D/RPAC2, POLR3K/RPC10, POLR2E/RPABC1, POLR2F/RPABC2, POLR2H/RPABC3, POLR2K/RPABC4 and POLR2L/RPABC5; a mobile stalk composed of two subunits POLR3H/RPC8 and CRCP/RPC9, protruding from the core and functioning primarily in transcription initiation; and additional subunits homologous to general transcription factors of the RNA polymerase II machinery, POLR3C/RPC3-POLR3F/RPC6-POLR3G/RPC7 heterotrimer required for transcription initiation and POLR3D/RPC4-POLR3E/RPC5 heterodimer involved in both transcription initiation and termination.

Its subcellular location is the nucleus. It localises to the nucleolus. In terms of biological role, DNA-dependent RNA polymerase catalyzes the transcription of DNA into RNA using the four ribonucleoside triphosphates as substrates. Common component of RNA polymerases I, II, and III which synthesize ribosomal RNA precursors, mRNA precursors and many functional non-coding RNAs, and small RNAs, such as 5S rRNA and tRNAs, respectively. Pol II is the central component of the basal RNA polymerase II transcription machinery. Pols are composed of mobile elements that move relative to each other. In Pol II, POLR2F/RPABC2 is part of the clamp element and together with parts of POLR2A/RPB1 and POLR2B/RPB2 forms a pocket to which the POLR2D/RPB4-POLR2G/RPB7 subcomplex binds. The sequence is that of DNA-directed RNA polymerases I, II, and III subunit RPABC2 from Mus musculus (Mouse).